A 639-amino-acid chain; its full sequence is Protein phosphatase 2C 35 (639 aa).

In terms of domain architecture, PPM-type phosphatase spans 227 to 630; the sequence is GGDPCGLQWA…DDVSVIVISL (404 aa). 2 residues coordinate Mn(2+): Asp262 and Gly263. The interval 295-341 is disordered; the sequence is QNVQHDQRPDQPGSAPSTTASDNQDQWGRRRRTRRSRPPRGADDDQR. A compositionally biased stretch (polar residues) spans 308-320; sequence SAPSTTASDNQDQ. The segment covering 323 to 332 has biased composition (basic residues); it reads RRRRTRRSRP. 2 residues coordinate Mn(2+): Asp558 and Asp621.

The protein belongs to the PP2C family. As to quaternary structure, interacts with XA21 (via juxtamembrane and kinase domains). Mg(2+) is required as a cofactor. The cofactor is Mn(2+).

It is found in the cell membrane. The catalysed reaction is O-phospho-L-seryl-[protein] + H2O = L-seryl-[protein] + phosphate. It carries out the reaction O-phospho-L-threonyl-[protein] + H2O = L-threonyl-[protein] + phosphate. Functionally, protein phosphatase that acts on XA21 pathogen recognition receptor. Negatively regulates cell death and XA21-mediated innate immunity. In Oryza sativa subsp. japonica (Rice), this protein is Protein phosphatase 2C 35 (XB15).